The following is a 480-amino-acid chain: MNRILLTLLTLTLLAGCQRVAVEETKLVPPAVEKTVLNVGTIYGSQIYVTTGQGEAGFDYEMASRFADHLELELAMKPYSNIKELYQALNSGEVDLIAAGLADTPTRRENFRLGPPLYRVNQVLVYKQGTPQPKDISQLKDEITVITDSSFVDTLSQLQKIYPELVWDQEQDKDNEELLAMIARGEISYTIADSTTFEISRRYMPELRAGLTLKEKQAIVWLLPAQNSDKLMSELLTFWHGEKLDGTLAHLDEKYFAHVKRFDYVDTRAFLRAIDNKLPKYKERFQYYAGDLDWRKLAATAYQESHWNPNARSPTGVRGLMMLTLPTAKQMGIENRLDAEQSIKGGAKYLRGILNRLPDSIPDNQRMWFALASYNIGYGHVEDARKLAESMGLNPSAWRDLKEVLPLLQKRKYYKQTRYGYARGNEAVHYVDNIRRYYDTLVWIDNQNKLLEENQALIEESQLADQIGIGEKAITGAQPE.

An N-terminal signal peptide occupies residues 1–15 (MNRILLTLLTLTLLA). The segment at 16 to 259 (GCQRVAVEET…HLDEKYFAHV (244 aa)) is non-LT domain. Residues 260 to 480 (KRFDYVDTRA…EKAITGAQPE (221 aa)) form an LT domain region. Residue Glu304 is part of the active site.

This sequence in the N-terminal section; belongs to the bacterial solute-binding protein 3 family. In the C-terminal section; belongs to the transglycosylase Slt family.

It localises to the cell outer membrane. It carries out the reaction Exolytic cleavage of the (1-&gt;4)-beta-glycosidic linkage between N-acetylmuramic acid (MurNAc) and N-acetylglucosamine (GlcNAc) residues in peptidoglycan, from either the reducing or the non-reducing ends of the peptidoglycan chains, with concomitant formation of a 1,6-anhydrobond in the MurNAc residue.. Murein-degrading enzyme that degrades murein glycan strands and insoluble, high-molecular weight murein sacculi, with the concomitant formation of a 1,6-anhydromuramoyl product. Lytic transglycosylases (LTs) play an integral role in the metabolism of the peptidoglycan (PG) sacculus. Their lytic action creates space within the PG sacculus to allow for its expansion as well as for the insertion of various structures such as secretion systems and flagella. The polypeptide is Membrane-bound lytic murein transglycosylase F (Shewanella woodyi (strain ATCC 51908 / MS32)).